A 254-amino-acid chain; its full sequence is uncharacterized protein (254 aa).

Residues 66–111 adopt a coiled-coil conformation; the sequence is DMVSEMNKRMDDLAARIVVLEDEKAELRRINQRLTEKVRDKDMEKA.

This is an uncharacterized protein from Ostreid herpesvirus 1 (isolate France) (OsHV-1).